We begin with the raw amino-acid sequence, 601 residues long: Elongation factor 4 (601 aa).

Positions 6 to 188 constitute a tr-type G domain; sequence KFTRNFSIIA…AICYLLPPPV (183 aa). GTP-binding positions include 18-23 and 135-138; these read DHGKST and NKID.

The protein belongs to the TRAFAC class translation factor GTPase superfamily. Classic translation factor GTPase family. LepA subfamily.

It is found in the cell inner membrane. It carries out the reaction GTP + H2O = GDP + phosphate + H(+). Its function is as follows. Required for accurate and efficient protein synthesis under certain stress conditions. May act as a fidelity factor of the translation reaction, by catalyzing a one-codon backward translocation of tRNAs on improperly translocated ribosomes. Back-translocation proceeds from a post-translocation (POST) complex to a pre-translocation (PRE) complex, thus giving elongation factor G a second chance to translocate the tRNAs correctly. Binds to ribosomes in a GTP-dependent manner. The polypeptide is Elongation factor 4 (Leptospira biflexa serovar Patoc (strain Patoc 1 / Ames)).